Here is a 244-residue protein sequence, read N- to C-terminus: Octanoyltransferase (244 aa).

One can recognise a BPL/LPL catalytic domain in the interval 49–237 (VAPGNFLIFC…HLTALFELHI (189 aa)). Residues 94 to 101 (RGGDITYH), 167 to 169 (AMG), and 180 to 182 (GFA) contribute to the substrate site. The active-site Acyl-thioester intermediate is the C198.

Belongs to the LipB family.

The protein localises to the cytoplasm. It catalyses the reaction octanoyl-[ACP] + L-lysyl-[protein] = N(6)-octanoyl-L-lysyl-[protein] + holo-[ACP] + H(+). It functions in the pathway protein modification; protein lipoylation via endogenous pathway; protein N(6)-(lipoyl)lysine from octanoyl-[acyl-carrier-protein]: step 1/2. Its function is as follows. Catalyzes the transfer of endogenously produced octanoic acid from octanoyl-acyl-carrier-protein onto the lipoyl domains of lipoate-dependent enzymes. Lipoyl-ACP can also act as a substrate although octanoyl-ACP is likely to be the physiological substrate. In Cytophaga hutchinsonii (strain ATCC 33406 / DSM 1761 / CIP 103989 / NBRC 15051 / NCIMB 9469 / D465), this protein is Octanoyltransferase.